The following is a 158-amino-acid chain: Phosphopantetheine adenylyltransferase (158 aa).

Residue Ser-9 participates in substrate binding. ATP-binding positions include 9-10 and His-17; that span reads SF. Residues Lys-41, Thr-73, and Arg-87 each coordinate substrate. ATP contacts are provided by residues 88–90, Glu-98, and 122–128; these read GLR and NQNISSS.

Belongs to the bacterial CoaD family. Homohexamer. The cofactor is Mg(2+).

It localises to the cytoplasm. The catalysed reaction is (R)-4'-phosphopantetheine + ATP + H(+) = 3'-dephospho-CoA + diphosphate. The protein operates within cofactor biosynthesis; coenzyme A biosynthesis; CoA from (R)-pantothenate: step 4/5. Functionally, reversibly transfers an adenylyl group from ATP to 4'-phosphopantetheine, yielding dephospho-CoA (dPCoA) and pyrophosphate. This Leuconostoc citreum (strain KM20) protein is Phosphopantetheine adenylyltransferase.